The sequence spans 108 residues: Protein S100-A15A (108 aa).

An EF-hand domain is found at 53 to 88; the sequence is KEPYYITELFQAADKNKDNQICFDEFLYILGKLVKD. Ca(2+) contacts are provided by Asp66, Asn68, Asp70, Gln72, and Glu77.

Belongs to the S-100 family.

The polypeptide is Protein S100-A15A (S100A15A) (Pongo abelii (Sumatran orangutan)).